The following is a 99-amino-acid chain: Large ribosomal subunit protein uL23 (99 aa).

Belongs to the universal ribosomal protein uL23 family. Part of the 50S ribosomal subunit. Contacts protein L29, and trigger factor when it is bound to the ribosome.

Functionally, one of the early assembly proteins it binds 23S rRNA. One of the proteins that surrounds the polypeptide exit tunnel on the outside of the ribosome. Forms the main docking site for trigger factor binding to the ribosome. This chain is Large ribosomal subunit protein uL23, found in Blochmanniella floridana.